Consider the following 257-residue polypeptide: Acetylglutamate kinase (257 aa).

Residues 43–44 (GG), Arg-65, and Asn-157 each bind substrate. Residues 180–185 (DVSGIL) and 208–210 (IIT) contribute to the ATP site.

Belongs to the acetylglutamate kinase family. ArgB subfamily. As to quaternary structure, homodimer.

The protein localises to the cytoplasm. The enzyme catalyses N-acetyl-L-glutamate + ATP = N-acetyl-L-glutamyl 5-phosphate + ADP. It functions in the pathway amino-acid biosynthesis; L-arginine biosynthesis; N(2)-acetyl-L-ornithine from L-glutamate: step 2/4. Its function is as follows. Catalyzes the ATP-dependent phosphorylation of N-acetyl-L-glutamate. The chain is Acetylglutamate kinase from Serratia proteamaculans (strain 568).